Consider the following 3013-residue polypeptide: Genome polyprotein (3013 aa).

An N-acetylserine; by host modification is found at serine 2. The interval 2–23 (STLPKPQKRNQRNTNRRPQDVK) is interaction with STAT1. The segment at 2-58 (STLPKPQKRNQRNTNRRPQDVKFPGGGQIVGGVYLLPRRGPRLGVRATRKTSERSQP) is interaction with EIF2AK2/PKR. The tract at residues 2 to 59 (STLPKPQKRNQRNTNRRPQDVKFPGGGQIVGGVYLLPRRGPRLGVRATRKTSERSQPR) is interaction with DDX3X. Positions 2 to 75 (STLPKPQKRN…PKARRQTGRT (74 aa)) are disordered. Topologically, residues 2–168 (STLPKPQKRN…EDGINYATGN (167 aa)) are cytoplasmic. 2 short sequence motifs (nuclear localization signal) span residues 5 to 13 (PKPQKRNQR) and 38 to 43 (PRRGPR). Residues 7 to 16 (PQKRNQRNTN) are compositionally biased toward basic residues. Residues 32–47 (GGVYLLPRRGPRLGVR) show a composition bias toward low complexity. Serine 53 carries the phosphoserine; by host modification. Short sequence motifs (nuclear localization signal) lie at residues 58–64 (PRGRRQP) and 66–71 (PKARRQ). Basic residues predominate over residues 58–72 (PRGRRQPIPKARRQT). Phosphoserine; by host is present on residues serine 99 and serine 116. The segment at 112–152 (PRRRSRNLGKVIDTLTCGFADLMGYIPVVGAPLGGVAAALA) is important for endoplasmic reticulum and mitochondrial localization. Positions 122–173 (VIDTLTCGFADLMGYIPVVGAPLGGVAAALAHGVRAVEDGINYATGNLPGCS) are interaction with APOA2. Residues 164 to 167 (YATG) are important for lipid droplets localization. A helical transmembrane segment spans residues 169–189 (LPGCSFSIFLLALLSCLTTPA). The propeptide at 178–191 (LLALLSCLTTPASA) is ER anchor for the core protein, removed in mature form by host signal peptidase. The Lumenal segment spans residues 190-358 (SAVHYANKSG…TGGHWGILAG (169 aa)). Asparagine 196, asparagine 209, asparagine 234, and asparagine 250 each carry an N-linked (GlcNAc...) asparagine; by host glycan. Residues 265 to 296 (MVGAAAFCSAMYVGDLCGGIFLVGQLFSFNPR) are important for fusion. Asparagine 305 carries an N-linked (GlcNAc...) asparagine; by host glycan. Residues 359–379 (ILYYSMVANWAKVLCILFLFA) form a helical membrane-spanning segment. Topologically, residues 380-723 (GVDATTRTTG…WEYVVLAFLL (344 aa)) are lumenal. The interval 385–412 (TRTTGAQAARATLGFTGLFQTGAKQNIH) is HVR1. Asparagine 417, asparagine 423, and asparagine 430 each carry an N-linked (GlcNAc...) (high mannose) asparagine; by host glycan. Disulfide bonds link cysteine 429–cysteine 553, cysteine 452–cysteine 459, cysteine 487–cysteine 495, and cysteine 504–cysteine 509. N-linked (GlcNAc...) asparagine; by host glycosylation is present at asparagine 448. The HVR2 stretch occupies residues 475–479 (ANVSG). N-linked (GlcNAc...) asparagine; by host glycosylation is present at asparagine 476. The segment at 481-494 (SEDRPYCWHYAPRP) is CD81-binding 1. N-linked (GlcNAc...) asparagine; by host glycosylation occurs at asparagine 533. The CD81-binding 2 stretch occupies residues 545 to 552 (PPAGAWYG). Asparagine 557 carries an N-linked (GlcNAc...) asparagine; by host glycan. 4 cysteine pairs are disulfide-bonded: cysteine 565/cysteine 570, cysteine 579/cysteine 583, cysteine 595/cysteine 618, and cysteine 605/cysteine 642. Asparagine 621 and asparagine 643 each carry an N-linked (GlcNAc...) (high mannose) asparagine; by host glycan. Cysteine 650 and cysteine 675 are disulfide-bonded. The PKR/eIF2-alpha phosphorylation homology domain (PePHD) stretch occupies residues 658–669 (IEMSPLLFSTTE). Residues 724 to 744 (LADARICACLWMVLLISQVEA) form a helical membrane-spanning segment. Topologically, residues 745 to 755 (ALENLIVLNAA) are lumenal. Residues 756–776 (SAASSQGWIYCLVFICCAWYI) traverse the membrane as a helical segment. The Cytoplasmic segment spans residues 777–780 (KGRV). The chain crosses the membrane as a helical span at residues 781-801 (VPGATYAILHLWPLLLLVLAL). The Lumenal portion of the chain corresponds to 802–811 (PQRAYAQDRE). The chain crosses the membrane as a helical span at residues 812-832 (QGASIGVVVIAAITIFTLTPA). Topologically, residues 833–879 (YKTMLVHFLWWNQYFIARSEALIQQWVPSLRVRGGRDAVILLTCLLH) are cytoplasmic. The helical transmembrane segment at 880-900 (PSLGFDITKMLLALLGPLYLL) threads the bilayer. Topologically, residues 901 to 926 (QVSLLRVPYYVRAHALLRVCILVRRV) are lumenal. The Peptidase C18 domain maps to 901-1024 (QVSLLRVPYY…DMKSMGWRLL (124 aa)). Positions 902–1204 (VSLLRVPYYV…PVENMETTMR (303 aa)) are protease NS2-3. Residue cysteine 920 is the site of S-palmitoyl cysteine; by host attachment. Residues 927 to 947 (AGGKYIQAALLKLGAWTGTYI) form a helical membrane-spanning segment. Positions 927 to 947 (AGGKYIQAALLKLGAWTGTYI) are interaction with host SCPS1. Over 948–1655 (YDHLAPLSTW…CMAADLEVIT (708 aa)) the chain is Cytoplasmic. Residues histidine 950, glutamate 970, and cysteine 991 each act as for protease NS2 activity; shared with dimeric partner in the active site. The Peptidase S29 domain occupies 1025–1206 (APITAYCQQT…ENMETTMRSP (182 aa)). Residues histidine 1081 and aspartate 1105 each act as charge relay system; for serine protease NS3 activity in the active site. The Zn(2+) site is built by cysteine 1121 and cysteine 1123. Catalysis depends on serine 1163, which acts as the Charge relay system; for serine protease NS3 activity. Cysteine 1169 and histidine 1173 together coordinate Zn(2+). Positions 1215-1367 (PAVPQTYQVG…PNITETALPS (153 aa)) constitute a Helicase ATP-binding domain. Residue 1228 to 1235 (APTGSGKS) participates in ATP binding. Mg(2+)-binding residues include serine 1235 and glutamate 1315. The DECH box signature appears at 1314-1317 (DECH). In terms of domain architecture, Helicase C-terminal spans 1374–1536 (YGKAIPLECI…ELTPSETTVR (163 aa)). An RNA-binding region spans residues 1484-1496 (QRRGRTGRGKPGV). The chain crosses the membrane as a helical span at residues 1656–1676 (STWVLAGGIVAALAAYCLTVG). Residues 1677–1688 (SVVICGRIVTSG) form an NS3-binding region. The Cytoplasmic portion of the chain corresponds to 1677–1803 (SVVICGRIVT…ALTSPLSTST (127 aa)). Residues 1804–1824 (TLLLNILGGWVASQLAPPTAS) form a helical membrane-spanning segment. The Lumenal portion of the chain corresponds to 1825 to 1826 (TA). A helical transmembrane segment spans residues 1827–1847 (FVVSGLAGAAVGSIGLGKVII). Position 1848 (aspartate 1848) is a topological domain, cytoplasmic. The helical transmembrane segment at 1849-1869 (ILAGYGAGVSGALVAFKIMSG) threads the bilayer. Residues 1870–1879 (EAPAVEDMVN) lie on the Lumenal side of the membrane. A helical transmembrane segment spans residues 1880-1900 (LLPALLSPGALVVGVVCAAVL). The Cytoplasmic portion of the chain corresponds to 1901-1970 (RRHVGPSEGA…WISGDWSAPC (70 aa)). Cysteine 1970 is lipidated: S-palmitoyl cysteine; by host. The stretch at 1971–2000 (SCSWLKDVWDWVCTVLSDFKTWLRAKLVPT) is an intramembrane region. Topologically, residues 2001–2992 (LPGIPFISCQ…FHSVSRARPR (992 aa)) are cytoplasmic. The Zn(2+) site is built by cysteine 2009, cysteine 2027, cysteine 2029, and cysteine 2050. An FKBP8-binding region spans residues 2118–2206 (EFFTEVDGVR…ASSSASQLSA (89 aa)). Positions 2118–2331 (EFFTEVDGVR…PVPPPRKKRV (214 aa)) are transcriptional activation. The interaction with non-structural protein 4A stretch occupies residues 2133-2137 (PPCRP). An interaction with host SKP2 region spans residues 2187–2440 (RLARGSPPSL…ALITPCAAEE (254 aa)). Phosphoserine; by host is present on residues serine 2192, serine 2195, serine 2199, serine 2202, serine 2205, and serine 2208. The interval 2208–2247 (SLKATCTTAGKHPDAELIEANLLWRQEVGGNITRVESENK) is ISDR. Positions 2208-2273 (SLKATCTTAG…REISVGAECF (66 aa)) are interaction with EIF2AK2/PKR. Positions 2247–2305 (KIIVLDSFDPLIAETDDREISVGAECFNPPRPKFPPALPVWARPDYNPPLLQPWKAPDY) are NS4B-binding. A V3 region spans residues 2298-2376 (QPWKAPDYEP…STLSSDMTPP (79 aa)). The segment at 2316–2411 (PPKGLPPVPP…PDLSSGSWST (96 aa)) is disordered. Positions 2321 to 2324 (PPVP) match the SH3-binding motif. Positions 2326–2334 (PRKKRVVQL) match the Nuclear localization signal motif. A compositionally biased stretch (polar residues) spans 2347-2373 (AQTSFPPSTATLSEDSGRETSTLSSDM). Positions 2375-2385 (PPREEADRASD) are enriched in basic and acidic residues. Serine 2464 is subject to Phosphoserine; by host. In terms of domain architecture, RdRp catalytic spans 2636–2754 (PMGFSYDTRC…ISESMGVAED (119 aa)). Residues aspartate 2642, aspartate 2740, and aspartate 2741 each coordinate Mg(2+). Residues 2993-3013 (NLLLCLLLLTVGVGIFLLPAR) form a helical membrane-spanning segment.

Belongs to the hepacivirus polyprotein family. As to quaternary structure, homooligomer. Interacts with E1 (via C-terminus). Interacts with the non-structural protein 5A. Interacts (via N-terminus) with host STAT1 (via SH2 domain); this interaction results in decreased STAT1 phosphorylation and ubiquitin-mediated proteasome-dependent STAT1 degradation, leading to decreased IFN-stimulated gene transcription. Interacts with host STAT3; this interaction constitutively activates STAT3. Interacts with host LTBR receptor. Interacts with host TNFRSF1A receptor and possibly induces apoptosis. Interacts with host HNRPK. Interacts with host YWHAE. Interacts with host UBE3A/E6AP. Interacts with host DDX3X. Interacts with host APOA2. Interacts with host RXRA protein. Interacts with host SP110 isoform 3/Sp110b; this interaction sequesters the transcriptional corepressor SP110 away from the nucleus. Interacts with host CREB3 nuclear transcription protein; this interaction triggers cell transformation. Interacts with host ACY3. Interacts with host C1QR1. Interacts with host RBM24; this interaction, which enhances the interaction of the mature core protein with 5'-UTR, may inhibit viral translation and favor replication. Interacts with host EIF2AK2/PKR; this interaction induces the autophosphorylation of EIF2AK2. Part of the viral assembly initiation complex composed of NS2, E1, E2, NS3, NS4A, NS5A and the mature core protein. Forms a heterodimer with envelope glycoprotein E2. Interacts with mature core protein. Interacts with protease NS2. The heterodimer E1/E2 interacts with host CLDN1; this interaction plays a role in viral entry into host cell. Interacts with host SPSB2 (via C-terminus). Part of the viral assembly initiation complex composed of NS2, E1, E2, NS3, NS4A, NS5A and the mature core protein. Interacts with host NEURL3; this interaction prevents E1 binding to glycoprotein E2. In terms of assembly, forms a heterodimer with envelope glycoprotein E1. Interacts with host CD81 and SCARB1 receptors; these interactions play a role in viral entry into host cell. Interacts with host EIF2AK2/PKR; this interaction inhibits EIF2AK2 and probably allows the virus to evade the innate immune response. Interacts with host CD209/DC-SIGN and CLEC4M/DC-SIGNR. Interact with host SPCS1; this interaction is essential for viral particle assembly. Interacts with protease NS2. The heterodimer E1/E2 interacts with host CLDN1; this interaction plays a role in viral entry into host cell. Part of the viral assembly initiation complex composed of NS2, E1, E2, NS3, NS4A, NS5A and the mature core protein. Interacts with host SLC3A2/4F2hc; the interaction may facilitate viral entry into host cell. Interacts with human PLSCR1. As to quaternary structure, homohexamer. Homoheptamer. Interacts with protease NS2. Homodimer. Interacts with host SPCS1; this interaction is essential for viral particle assembly. Interacts with envelope glycoprotein E1. Interacts with envelope glycoprotein E2. Interacts with viroporin p7. Interacts with serine protease/helicase NS3. Part of the replication complex composed of NS2, NS3, NS4A, NS4B, NS5A and the RNA-directed RNA polymerase embedded in an ER-derived membranous web. Part of the viral assembly initiation complex composed of NS2, E1, E2, NS3, NS4A, NS5A and the mature core protein. In terms of assembly, interacts with protease NS2. Interacts with non-structural protein 4A; this interaction stabilizes the folding of NS3 serine protease. NS3-NS4A interaction is essential for NS3 activation and allows membrane anchorage of the latter. NS3/NS4A complex also prevents phosphorylation of host IRF3, thus preventing the establishment of dsRNA induced antiviral state. Interacts with host MAVS; this interaction leads to the cleavage and inhibition of host MAVS. Interacts with host TICAM1; this interaction leads to the cleavage and inhibition of host TICAM1. Interacts with host TANK-binding kinase/TBK1; this interaction results in the inhibition of the association between TBK1 and IRF3, which leads to the inhibition of IRF3 activation. Interacts with host RBM24. Part of the replication complex composed of NS2, NS3, NS4A, NS4B, NS5A and the RNA-directed RNA polymerase embedded in an ER-derived membranous web. Part of the viral assembly initiation complex composed of NS2, E1, E2, NS3, NS4A, NS5A and the mature core protein. As to quaternary structure, interacts with NS3 serine protease; this interaction stabilizes the folding of NS3 serine protease. NS3-NS4A interaction is essential for NS3 activation and allows membrane anchorage of the latter. Interacts with non-structural protein 5A (via N-terminus). Part of the replication complex composed of NS2, NS3, NS4A, NS4B, NS5A and the RNA-directed RNA polymerase embedded in an ER-derived membranous web. Part of the viral assembly initiation complex composed of NS2, E1, E2, NS3, NS4A, NS5A and the mature core protein. Homomultimer. Interacts with non-structural protein NS5A. Interacts with host PLA2G4C; this interaction likely initiates the recruitment of replication complexes to lipid droplets. Interacts with host STING; this interaction disrupts the interaction between STING and TBK1 thereby suppressing the interferon signaling. Part of the replication complex composed of NS2, NS3, NS4A, NS4B, NS5A and the RNA-directed RNA polymerase embedded in an ER-derived membranous web. In terms of assembly, monomer. Homodimer; dimerization is required for RNA-binding. Interacts with the mature core protein. Interacts (via N-terminus) with non-structural protein 4A. Interacts with non-structural protein 4B. Interacts (via region D2) with RNA-directed RNA polymerase. Part of the viral assembly initiation complex composed of NS2, E1, E2, NS3, NS4A, NS5A and the mature core protein. Part of the replication complex composed of NS2, NS3, NS4A, NS4B, NS5A and the RNA-directed RNA polymerase embedded in an ER-derived membranous web. Interacts with host GRB2. Interacts with host BIN1. Interacts with host PIK3R1. Interacts with host SRCAP. Interacts with host FKBP8. Interacts (via C-terminus) with host VAPB (via MSP domain). Interacts with host EIF2AK2/PKR; this interaction leads to disruption of EIF2AK2 dimerization by NS5A and probably allows the virus to evade the innate immune response. Interacts (via N-terminus) with host PACSIN2 (via N-terminus); this interaction attenuates protein kinase C alpha-mediated phosphorylation of PACSIN2 by disrupting the interaction between PACSIN2 and PRKCA. Interacts (via N-terminus) with host SRC kinase (via SH2 domain). Interacts with most Src-family kinases. Interacts with host IFI27 and SKP2; promotes the ubiquitin-mediated proteasomal degradation of NS5A. Interacts with host GPS2. Interacts with host TNFRSF21; this interaction allows the modulation by the virus of JNK, p38 MAPK, STAT3, and Akt signaling pathways in a DR6-dependent manner. Interacts (via N-terminus) with host CIDEB (via N-terminus); this interaction seems to regulate the association of HCV particles with APOE. Interacts with host CHKA/Choline Kinase-alpha; CHKA bridges host PI4KA and NS5A and potentiates NS5A-stimulated PI4KA activity, which then facilitates the targeting of the ternary complex to the ER for viral replication. Interacts with host SPSB2 (via C-terminus); this interaction targets NS5A for ubiquitination and degradation. Interacts with host RAB18; this interaction may promote the association of NS5A and other replicase components with lipid droplets. Interacts (via region D2) with host PPIA/CYPA; the interaction stimulates RNA-binding ability of NS5A and is dependent on the peptidyl-prolyl cis-trans isomerase activity of PPIA/CYPA. Interacts with host TRIM14; this interaction induces the degradation of NS5A. As to quaternary structure, homooligomer. Interacts with non-structural protein 5A. Interacts with host VAPB. Interacts with host PRK2/PKN2. Interacts with host HNRNPA1 and SEPT6; these interactions facilitate viral replication. Part of the replication complex composed of NS2, NS3, NS4A, NS4B, NS5A and the RNA-directed RNA polymerase. Zn(2+) is required as a cofactor. Requires Mg(2+) as cofactor. Specific enzymatic cleavages in vivo yield mature proteins. The structural proteins, core, E1, E2 and p7 are produced by proteolytic processing by host signal peptidases. The core protein precursor is synthesized as a 23 kDa, which is retained in the ER membrane through the hydrophobic signal peptide. Cleavage by the signal peptidase releases the 21 kDa mature core protein. The cleavage of the core protein precursor occurs between aminoacids 176 and 188 but the exact cleavage site is not known. Some degraded forms of the core protein appear as well during the course of infection. The other proteins (p7, NS2, NS3, NS4A, NS4B, NS5A and NS5B) are cleaved by the viral proteases. Autoprocessing between NS2 and NS3 is mediated by the NS2 cysteine protease catalytic domain and regulated by the NS3 N-terminal domain. Post-translationally, phosphorylated by host PKC and PKA. In terms of processing, ubiquitinated; mediated by UBE3A and leading to core protein subsequent proteasomal degradation. Highly N-glycosylated. Post-translationally, palmitoylation is required for NS2/3 autoprocessing and E2 recruitment to membranes. In terms of processing, palmitoylated. This modification may play a role in its polymerization or in protein-protein interactions. Phosphorylated on serines in a basal form termed p56. p58 is a hyperphosphorylated form of p56. p56 and p58 coexist in the cell in roughly equivalent amounts. Hyperphosphorylation is dependent on the presence of NS4A. Host CSNK1A1/CKI-alpha or RPS6KB1 kinases may be responsible for NS5A phosphorylation. Post-translationally, tyrosine phosphorylation is essential for the interaction with host SRC. In terms of processing, the N-terminus is phosphorylated by host PRK2/PKN2.

It is found in the host endoplasmic reticulum membrane. Its subcellular location is the host mitochondrion membrane. The protein localises to the virion. The protein resides in the host cytoplasm. It localises to the host nucleus. It is found in the host lipid droplet. Its subcellular location is the virion membrane. The protein localises to the host mitochondrion. The protein resides in the host cell membrane. It localises to the host perinuclear region. It carries out the reaction Hydrolysis of four peptide bonds in the viral precursor polyprotein, commonly with Asp or Glu in the P6 position, Cys or Thr in P1 and Ser or Ala in P1'.. It catalyses the reaction a ribonucleoside 5'-triphosphate + H2O = a ribonucleoside 5'-diphosphate + phosphate + H(+). The catalysed reaction is ATP + H2O = ADP + phosphate + H(+). The enzyme catalyses RNA(n) + a ribonucleoside 5'-triphosphate = RNA(n+1) + diphosphate. With respect to regulation, inhibited by the antiviral drug hexamethylene amiloride. Inhibition by amantadine appears to be genotype-dependent. Also inhibited by long-alkyl-chain iminosugar derivatives. Activity is up-regulated by PRK2/PKN2-mediated phosphorylation. In terms of biological role, packages viral RNA to form a viral nucleocapsid, and promotes virion budding. Participates in the viral particle production as a result of its interaction with the non-structural protein 5A. Binds RNA and may function as a RNA chaperone to induce the RNA structural rearrangements taking place during virus replication. Modulates viral translation initiation by interacting with viral IRES and 40S ribosomal subunit. Affects various cell signaling pathways, host immunity and lipid metabolism. Prevents the establishment of cellular antiviral state by blocking the interferon-alpha/beta (IFN-alpha/beta) and IFN-gamma signaling pathways and by blocking the formation of phosphorylated STAT1 and promoting ubiquitin-mediated proteasome-dependent degradation of STAT1. Activates STAT3 leading to cellular transformation. Regulates the activity of cellular genes, including c-myc and c-fos. May repress the promoter of p53, and sequester CREB3 and SP110 isoform 3/Sp110b in the cytoplasm. Represses cell cycle negative regulating factor CDKN1A, thereby interrupting an important check point of normal cell cycle regulation. Targets transcription factors involved in the regulation of inflammatory responses and in the immune response: suppresses TNF-induced NF-kappa-B activation, and activates AP-1. Binds to dendritic cells (DCs) via C1QR1, resulting in down-regulation of T-lymphocytes proliferation. Alters lipid metabolism by interacting with hepatocellular proteins involved in lipid accumulation and storage. Induces up-regulation of FAS promoter activity, and thereby contributes to the increased triglyceride accumulation in hepatocytes (steatosis). Functionally, forms a heterodimer with envelope glycoprotein E2, which mediates virus attachment to the host cell, virion internalization through clathrin-dependent endocytosis and fusion with host membrane. Fusion with the host cell is most likely mediated by both E1 and E2, through conformational rearrangements of the heterodimer required for fusion rather than a classical class II fusion mechanism. E1/E2 heterodimer binds host apolipoproteins such as APOB and ApoE thereby forming a lipo-viro-particle (LVP). APOE associated to the LVP allows the initial virus attachment to cell surface receptors such as the heparan sulfate proteoglycans (HSPGs), syndecan-1 (SDC1), syndecan-1 (SDC2), the low-density lipoprotein receptor (LDLR) and scavenger receptor class B type I (SCARB1). The cholesterol transfer activity of SCARB1 allows E2 exposure and binding of E2 to SCARB1 and the tetraspanin CD81. E1/E2 heterodimer binding on CD81 activates the epithelial growth factor receptor (EGFR) signaling pathway. Diffusion of the complex E1-E2-EGFR-SCARB1-CD81 to the cell lateral membrane allows further interaction with Claudin 1 (CLDN1) and occludin (OCLN) to finally trigger HCV entry. Its function is as follows. Forms a heterodimer with envelope glycoprotein E1, which mediates virus attachment to the host cell, virion internalization through clathrin-dependent endocytosis and fusion with host membrane. Fusion with the host cell is most likely mediated by both E1 and E2, through conformational rearrangements of the heterodimer required for fusion rather than a classical class II fusion mechanism. The interaction between envelope glycoprotein E2 and host apolipoprotein E/APOE allows the proper assembly, maturation and infectivity of the viral particles. This interaction is probably promoted via the up-regulation of cellular autophagy by the virus. E1/E2 heterodimer binds host apolipoproteins such as APOB and APOE thereby forming a lipo-viro-particle (LVP). APOE associated to the LVP allows the initial virus attachment to cell surface receptors such as the heparan sulfate proteoglycans (HSPGs), syndecan-1 (SDC1), syndecan-1 (SDC2), the low-density lipoprotein receptor (LDLR) and scavenger receptor class B type I (SCARB1). The cholesterol transfer activity of SCARB1 allows E2 exposure and binding of E2 to SCARB1 and the tetraspanin CD81. E1/E2 heterodimer binding on CD81 activates the epithelial growth factor receptor (EGFR) signaling pathway. Diffusion of the complex E1-E2-EGFR-SCARB1-CD81 to the cell lateral membrane allows further interaction with Claudin 1 (CLDN1) and occludin (OCLN) to finally trigger HCV entry. Inhibits host EIF2AK2/PKR activation, preventing the establishment of an antiviral state. Viral ligand for CD209/DC-SIGN and CLEC4M/DC-SIGNR, which are respectively found on dendritic cells (DCs), and on liver sinusoidal endothelial cells and macrophage-like cells of lymph node sinuses. These interactions allow the capture of circulating HCV particles by these cells and subsequent facilitated transmission to permissive cells such as hepatocytes and lymphocyte subpopulations. The interaction between E2 and host amino acid transporter complex formed by SLC3A2 and SLC7A5/LAT1 may facilitate viral entry into host cell. Ion channel protein that acts as a viroporin and plays an essential role in the assembly, envelopment and secretion of viral particles. Regulates the host cell secretory pathway, which induces the intracellular retention of viral glycoproteins and favors assembly of viral particles. Creates a pore in acidic organelles and releases Ca(2+) and H(+) in the cytoplasm of infected cells, leading to a productive viral infection. High levels of cytoplasmic Ca(2+) may trigger membrane trafficking and transport of viral ER-associated proteins to viroplasms, sites of viral genome replication. This ionic imbalance induces the assembly of the inflammasome complex, which triggers the maturation of pro-IL-1beta into IL-1beta through the action of caspase-1. Targets also host mitochondria and induces mitochondrial depolarization. In addition of its role as a viroporin, acts as a lipid raft adhesion factor. In terms of biological role, cysteine protease required for the proteolytic auto-cleavage between the non-structural proteins NS2 and NS3. The N-terminus of NS3 is required for the function of NS2 protease (active region NS2-3). Promotes the initiation of viral particle assembly by mediating the interaction between structural and non-structural proteins. Functionally, displays three enzymatic activities: serine protease with a chymotrypsin-like fold, NTPase and RNA helicase. NS3 serine protease, in association with NS4A, is responsible for the cleavages of NS3-NS4A, NS4A-NS4B, NS4B-NS5A and NS5A-NS5B. The NS3/NS4A complex prevents phosphorylation of host IRF3, thus preventing the establishment of dsRNA induced antiviral state. The NS3/NS4A complex induces host amino acid transporter component SLC3A2, thus contributing to HCV propagation. NS3 RNA helicase binds to RNA and unwinds both dsDNA and dsRNA in the 3' to 5' direction, and likely resolves RNA complicated stable secondary structures in the template strand. Binds a single ATP and catalyzes the unzipping of a single base pair of dsRNA. Inhibits host antiviral proteins TBK1 and IRF3 thereby preventing the establishment of an antiviral state. Cleaves host MAVS/CARDIF thereby preventing the establishment of an antiviral state. Cleaves host TICAM1/TRIF, thereby disrupting TLR3 signaling and preventing the establishment of an antiviral state. Its function is as follows. Peptide cofactor which forms a non-covalent complex with the N-terminal of NS3 serine protease. The NS3/NS4A complex prevents phosphorylation of host IRF3, thus preventing the establishment of dsRNA induced antiviral state. The NS3/NS4A complex induces host amino acid transporter component SLC3A2, thus contributing to HCV propagation. Induces a specific membrane alteration that serves as a scaffold for the virus replication complex. This membrane alteration gives rise to the so-called ER-derived membranous web that contains the replication complex. NS4B self-interaction contributes to its function in membranous web formation. Promotes host TRIF protein degradation in a CASP8-dependent manner thereby inhibiting host TLR3-mediated interferon signaling. Disrupts the interaction between STING and TBK1 contributing to the inhibition of interferon signaling. In terms of biological role, phosphorylated protein that is indispensable for viral replication and assembly. Both hypo- and hyperphosphorylated states are required for the viral life cycle. The hyperphosphorylated form of NS5A is an inhibitor of viral replication. Involved in RNA-binding and especially in binding to the viral genome. Zinc is essential for RNA-binding. Participates in the viral particle production as a result of its interaction with the mature viral core protein. Its interaction with host VAPB may target the viral replication complex to vesicles. Down-regulates viral IRES translation initiation. Mediates interferon resistance, presumably by interacting with and inhibiting host EIF2AK2/PKR. Prevents BIN1-induced apoptosis. Acts as a transcriptional activator of some host genes important for viral replication when localized in the nucleus. Via the interaction with host PACSIN2, modulates lipid droplet formation in order to promote virion assembly. Modulates TNFRSF21/DR6 signaling pathway for viral propagation. Functionally, RNA-dependent RNA polymerase that performs primer-template recognition and RNA synthesis during viral replication. Initiates RNA transcription/replication at a flavin adenine dinucleotide (FAD), resulting in a 5'- FAD cap on viral RNAs. In this way, recognition of viral 5' RNA by host pattern recognition receptors can be bypassed, thereby evading activation of antiviral pathways. The chain is Genome polyprotein from Hepatitis C virus genotype 6d (isolate VN235) (HCV).